Consider the following 348-residue polypeptide: Sulfate/thiosulfate import ATP-binding protein CysA (348 aa).

Positions 3–233 (ILIDNISKKF…PATPFVFSLL (231 aa)) constitute an ABC transporter domain. 35-42 (GPSGSGKS) provides a ligand contact to ATP.

The protein belongs to the ABC transporter superfamily. Sulfate/tungstate importer (TC 3.A.1.6) family.

The protein resides in the plastid. It is found in the chloroplast. It catalyses the reaction sulfate(out) + ATP + H2O = sulfate(in) + ADP + phosphate + H(+). The catalysed reaction is thiosulfate(out) + ATP + H2O = thiosulfate(in) + ADP + phosphate + H(+). In terms of biological role, part of the ABC transporter complex involved in sulfate/thiosulfate import. Responsible for energy coupling to the transport system. The polypeptide is Sulfate/thiosulfate import ATP-binding protein CysA (Mesostigma viride (Green alga)).